The primary structure comprises 178 residues: MORN repeat-containing protein 5 (178 aa).

3 MORN repeats span residues Tyr-8–Arg-30, Tyr-31–Lys-53, and Tyr-54–Lys-75.

It is found in the cell projection. It localises to the cilium. The protein resides in the flagellum. In Danio rerio (Zebrafish), this protein is MORN repeat-containing protein 5 (morn5).